The following is a 222-amino-acid chain: MGQKVHPHGLRVGVIKDWDAKWYADKKNFADNLIEDQQIRKFIKKELFSAGIAKIEIERSAKRVKLNIHTAKPGVIIGKGGSGIERLKASLKNIIAEKNVLINIVEVKNAETNAQLMAENIAAQLEKRISFRRAMKQTIQRAMKAGTLGVKTACSGRLGGAEIARTEQYNEGTIPLQTIRADIDYGFAEADTTYGKIGVKVWVYNGEVLPTKKVEKKEEANA.

Residues isoleucine 39–lysine 108 enclose the KH type-2 domain.

The protein belongs to the universal ribosomal protein uS3 family. Part of the 30S ribosomal subunit. Forms a tight complex with proteins S10 and S14.

Its function is as follows. Binds the lower part of the 30S subunit head. Binds mRNA in the 70S ribosome, positioning it for translation. The polypeptide is Small ribosomal subunit protein uS3 (Clostridium perfringens (strain ATCC 13124 / DSM 756 / JCM 1290 / NCIMB 6125 / NCTC 8237 / Type A)).